We begin with the raw amino-acid sequence, 469 residues long: Alpha,alpha-trehalose-phosphate synthase [UDP-forming] (469 aa).

D-glucose 6-phosphate is bound by residues Tyr87 and Asp141. 2 residues coordinate UDP: Arg279 and Lys284. 2 residues coordinate UDP-alpha-D-glucose: Arg279 and Lys284. Residue Arg317 coordinates D-glucose 6-phosphate. 378-386 (DGMNLVSYE) contacts UDP-alpha-D-glucose. 382 to 386 (LVSYE) serves as a coordination point for UDP.

Belongs to the glycosyltransferase 20 family.

The catalysed reaction is D-glucose 6-phosphate + UDP-alpha-D-glucose = alpha,alpha-trehalose 6-phosphate + UDP + H(+). It functions in the pathway carbohydrate biosynthesis. Functionally, synthase catalytic subunit of the trehalose synthase complex that catalyzes the production of trehalose from glucose-6-phosphate and UDP-alpha-D-glucose in a two step process. The disaccharide trehalose serves as a storage carbohydrate that is mobilized during spore germination. The protein is Alpha,alpha-trehalose-phosphate synthase [UDP-forming] of Yarrowia lipolytica (strain CLIB 122 / E 150) (Yeast).